The primary structure comprises 216 residues: MRRESKQMTIFRSGDQPPGWCELTDFEFVDLTDQPLPIPLAAEKQRLLVTSGSCCVRSAEGAQVLSEGQFLDMDGANGPFTADAGEGAAQVLVFYGRWGNELGGCGVFKLGPDTPVPVRGDPVNYPKSTNFDSHYHDCDEYWVIIEGAGTVVVGSRSFEVEVGDCVAIGMGHHHDLSEVWSDVKGAYFETTLEGRKRFGHLWEHTHGPADVRPERV.

The region spanning 125-176 (YPKSTNFDSHYHDCDEYWVIIEGAGTVVVGSRSFEVEVGDCVAIGMGHHHDL) is the Cupin type-2 domain.

This is an uncharacterized protein from Sinorhizobium fredii (strain NBRC 101917 / NGR234).